A 513-amino-acid chain; its full sequence is Solute carrier family 2, facilitated glucose transporter member 7 (513 aa).

Residues 1 to 21 (MEDKEIGTPLPLPHSEARLQP) are Cytoplasmic-facing. A helical transmembrane segment spans residues 22 to 42 (TLVLTTLSAAFGSVFQYGYNI). Residues 43-78 (AVINTPHKVFKSFYNDTHFERHGTFMDESTLLLLWS) are Extracellular-facing. Asparagine 57 is a glycosylation site (N-linked (GlcNAc...) asparagine). Residues 79–99 (CTVSMFPLGGLLGSLVVGLMV) traverse the membrane as a helical segment. At 100–107 (NKWGRKGT) the chain is on the cytoplasmic side. The chain crosses the membrane as a helical span at residues 108-128 (LLINNVFAITSAVLMGVSKVA). Over 129–138 (RAFELIILSR) the chain is Extracellular. The helical transmembrane segment at 139–159 (VLVGICAGIAYSTLPMYLGEL) threads the bilayer. The Cytoplasmic segment spans residues 160 to 172 (APQNLRGALGTMT). The chain crosses the membrane as a helical span at residues 173–193 (EVFVIIGVLLAQIFSLQAILG). Residues 194 to 198 (NATGW) are Extracellular-facing. A helical membrane pass occupies residues 199–219 (PILLALTGVPAVIQLLSLPFF). Residues 220-282 (PESPRYTLIE…LNLFTFRPLR (63 aa)) lie on the Cytoplasmic side of the membrane. The chain crosses the membrane as a helical span at residues 283 to 303 (WQLISIVVLMAGQQLSGINAV). Residues 295–296 (QQ) and asparagine 301 each bind D-glucose. Residues 304 to 322 (NYYADVIYTSAGVDPTQSQ) are Extracellular-facing. Residues 323–343 (YVTLGSGVINLVMTLVSAVII) form a helical membrane-spanning segment. Residue asparagine 332 participates in D-glucose binding. Topologically, residues 344–351 (ERLGRRIL) are cytoplasmic. A helical transmembrane segment spans residues 352–372 (LLSGYAICCSACLVLTVALLL). Residues 373 to 380 (QSTAPELS) are Extracellular-facing. Residues 381–401 (YLSIVCVFSYIVGHSIGPSPV) form a helical membrane-spanning segment. The Cytoplasmic portion of the chain corresponds to 402–416 (PSVVRTEIVLQSSRT). A helical transmembrane segment spans residues 417-437 (AAFTVDGAVHWLTNFIVGLTF). Residues 438 to 446 (PSIQVAIGA) lie on the Extracellular side of the membrane. The helical transmembrane segment at 447–467 (YSFLVFAGVCILTAAYIYVVI) threads the bilayer. The Cytoplasmic segment spans residues 468–513 (PETKGRTFVEINCAFAKRNGVEFPEEKEVATAKPHTPSLPTKETAF). The segment at 494–513 (KEVATAKPHTPSLPTKETAF) is disordered.

This sequence belongs to the major facilitator superfamily. Sugar transporter (TC 2.A.1.1) family. Glucose transporter subfamily.

It is found in the cell membrane. The protein resides in the apical cell membrane. The catalysed reaction is D-glucose(out) = D-glucose(in). It catalyses the reaction D-fructose(out) = D-fructose(in). Functionally, probable sugar transporter. Even if its physiological substrate is subject to discussion, it is able to transport glucose and fructose. Does not transport galactose, 2-deoxy-d-glucose and xylose. The protein is Solute carrier family 2, facilitated glucose transporter member 7 of Mus musculus (Mouse).